The following is a 326-amino-acid chain: Tagatose 1,6-diphosphate aldolase (326 aa).

This sequence belongs to the aldolase LacD family.

The enzyme catalyses D-tagatofuranose 1,6-bisphosphate = D-glyceraldehyde 3-phosphate + dihydroxyacetone phosphate. It functions in the pathway carbohydrate metabolism; D-tagatose 6-phosphate degradation; D-glyceraldehyde 3-phosphate and glycerone phosphate from D-tagatose 6-phosphate: step 2/2. In Staphylococcus aureus (strain MW2), this protein is Tagatose 1,6-diphosphate aldolase.